The chain runs to 239 residues: Sugar fermentation stimulation protein homolog (239 aa).

The protein belongs to the SfsA family.

This Methylobacterium sp. (strain 4-46) protein is Sugar fermentation stimulation protein homolog.